Reading from the N-terminus, the 208-residue chain is Probable transcriptional regulator ycf29 (208 aa).

The Response regulatory domain maps to 11–118 (KLILIEPEEH…ELIAIISNLI (108 aa)). D60 is subject to 4-aspartylphosphate. The region spanning 146-208 (TSFSYINLTV…NRIQILSYFN (63 aa)) is the HTH luxR-type domain.

It localises to the plastid. The protein localises to the chloroplast. The sequence is that of Probable transcriptional regulator ycf29 (ycf29) from Guillardia theta (Cryptophyte).